The sequence spans 900 residues: MPQVDPELFDRGQFQAELALKSSPIAAFKKAIRQFREVLDNRFNSGRDIRRLIEDRAWCVDQILQQAWQRFDWGDDADITLVAVGGYGRGELHPYSDVDLLILLDSEDQESFREPIEGFLTLLWDIGLEVGQSVRSVQQCAEEARADLTVITTLMECRTICGPDSLRQRMLQVTGSAHMWPSKEFFLAKRHEQQRRHAKYNDTEYNLEPNVKGSPGGLRDIQTILWMARRQFGSLNLHALVREGFLVESECSMLASSQEFLWRVRYALHMLAGRAEDRLLFDHQRSIARLFGYEDNDVKLAVERFMQKYYRVVMAISELNDLIIQHFEEVILPCEQPVQIQPLNSRFQLRDGYIEVTHPNVFKRTPFALLEIFVLMAQHPEIKGVRADTIRLLRDSRHLIDDEFRHDIRNTSLFIELFKSSQGIHRNLRRMNRYGILGRYLPEFGHIIGQMQHDLFHIYTVDAHTLNLIKHLRKLNRPEMAEKYPLASKIIDRLPKPELIYIAGLYHDIAKGRGGDHSELGAVDAEAFCQSHQLPPWDTQLVSWLVQNHLVMSTTAQRKDLSDPQVIFDFAQLVGDQTHLDYLYVLTVADINATNPTLWNSWRASLLRQLYTETKRALRRGLENPVDREEQIRQTQTAALDQLVRNGIDQDDAEQLWSQLGDDYFLRHTAGDVAWHTEAILQHPDDGTPLVLIKETTQREFESGSQIFIYAADQHDFFAVTVAAMDQLNLSIQDARIITSTSQFTLDTYIVLDADGDSIGNNPERIAEIREGLIDALKNPDDYPTIIQRRVPRQLKHFAFAPQVTISTDALRQVSVLEVIAPDRPGLLARIGGIFLDFDLSVQNAKIATLGERVEDVFYITDARNQPLADPDLCKRLQAALVEQLSQDNGRDTLPTRINF.

The tract at residues 1 to 342 (MPQVDPELFD…PCEQPVQIQP (342 aa)) is uridylyltransferase. The tract at residues 343–705 (LNSRFQLRDG…TTQREFESGS (363 aa)) is uridylyl-removing. The 123-residue stretch at 461–583 (VDAHTLNLIK…VGDQTHLDYL (123 aa)) folds into the HD domain. 2 ACT domains span residues 706 to 789 (QIFI…IIQR) and 816 to 891 (VLEV…DNGR).

The protein belongs to the GlnD family. Mg(2+) serves as cofactor.

It catalyses the reaction [protein-PII]-L-tyrosine + UTP = [protein-PII]-uridylyl-L-tyrosine + diphosphate. The enzyme catalyses [protein-PII]-uridylyl-L-tyrosine + H2O = [protein-PII]-L-tyrosine + UMP + H(+). With respect to regulation, uridylyltransferase (UTase) activity is inhibited by glutamine, while glutamine activates uridylyl-removing (UR) activity. Its function is as follows. Modifies, by uridylylation and deuridylylation, the PII regulatory proteins (GlnB and homologs), in response to the nitrogen status of the cell that GlnD senses through the glutamine level. Under low glutamine levels, catalyzes the conversion of the PII proteins and UTP to PII-UMP and PPi, while under higher glutamine levels, GlnD hydrolyzes PII-UMP to PII and UMP (deuridylylation). Thus, controls uridylylation state and activity of the PII proteins, and plays an important role in the regulation of nitrogen assimilation and metabolism. The protein is Bifunctional uridylyltransferase/uridylyl-removing enzyme of Pseudomonas aeruginosa (strain UCBPP-PA14).